A 351-amino-acid polypeptide reads, in one-letter code: V-type proton ATPase subunit d1 (351 aa).

The protein belongs to the V-ATPase V0D/AC39 subunit family. In terms of assembly, V-ATPase is a heteromultimeric enzyme composed of a peripheral catalytic V1 complex (components A to H) attached to an integral membrane V0 proton pore complex (components: a, c, c'', d and e).

It localises to the vacuole membrane. Its function is as follows. Subunit of the integral membrane V0 complex of vacuolar ATPase. Vacuolar ATPase is responsible for acidifying a variety of intracellular compartments in eukaryotic cells, thus providing most of the energy required for transport processes in the vacuolar system. The protein is V-type proton ATPase subunit d1 (VHA-d1) of Arabidopsis thaliana (Mouse-ear cress).